Reading from the N-terminus, the 205-residue chain is MSILTYSGGSCLAMAGKECFVVISDNRLGEQLKTISMEVPKLHVINDGIVMGLTGLRTDQQTFAQKVNFRTEMYKLREERDINGKAFAALVSSMLYEARFGPWFVEPVIGTIDRKTGEVYLCATDLIGAPCEPEDYVCAGTCAESLHGMCEALWRPGLEPEELFEVAAQAMLSACDRDSLSGYGAVAAIVTKDKLVTRLIKGRKD.

Belongs to the peptidase T1B family. The 26S proteasome consists of a 20S proteasome core and two 19S regulatory subunits. The 20S proteasome core is composed of 28 subunits that are arranged in four stacked rings, resulting in a barrel-shaped structure. The two end rings are each formed by seven alpha subunits, and the two central rings are each formed by seven beta subunits. The catalytic chamber with the active sites is on the inside of the barrel.

The protein resides in the cytoplasm. It localises to the nucleus. Its function is as follows. Non-catalytic component of the proteasome, a multicatalytic proteinase complex which is characterized by its ability to cleave peptides with Arg, Phe, Tyr, Leu, and Glu adjacent to the leaving group at neutral or slightly basic pH. The proteasome has an ATP-dependent proteolytic activity. The sequence is that of Proteasome subunit beta type-3 (PSB3) from Trypanosoma brucei brucei.